The primary structure comprises 252 residues: Enolase-phosphatase E1 (252 aa).

Positions 14 and 16 each coordinate Mg(2+). Substrate-binding positions include 143–144 (SS) and lysine 177. Aspartate 202 lines the Mg(2+) pocket.

The protein belongs to the HAD-like hydrolase superfamily. MasA/MtnC family. In terms of assembly, monomer. The cofactor is Mg(2+).

The protein resides in the cytoplasm. It is found in the nucleus. The catalysed reaction is 5-methylsulfanyl-2,3-dioxopentyl phosphate + H2O = 1,2-dihydroxy-5-(methylsulfanyl)pent-1-en-3-one + phosphate. It participates in amino-acid biosynthesis; L-methionine biosynthesis via salvage pathway; L-methionine from S-methyl-5-thio-alpha-D-ribose 1-phosphate: step 3/6. It functions in the pathway amino-acid biosynthesis; L-methionine biosynthesis via salvage pathway; L-methionine from S-methyl-5-thio-alpha-D-ribose 1-phosphate: step 4/6. Functionally, bifunctional enzyme that catalyzes the enolization of 2,3-diketo-5-methylthiopentyl-1-phosphate (DK-MTP-1-P) into the intermediate 2-hydroxy-3-keto-5-methylthiopentenyl-1-phosphate (HK-MTPenyl-1-P), which is then dephosphorylated to form the acireductone 1,2-dihydroxy-3-keto-5-methylthiopentene (DHK-MTPene). The protein is Enolase-phosphatase E1 of Drosophila pseudoobscura pseudoobscura (Fruit fly).